A 526-amino-acid polypeptide reads, in one-letter code: Peptide chain release factor 3 (526 aa).

In terms of domain architecture, tr-type G spans 8–277; that stretch reads GKRRTFAIIS…GLTEWAPAPQ (270 aa). Residues 17–24, 85–89, and 139–142 contribute to the GTP site; these read SHPDAGKT, DTPGH, and NKMD.

It belongs to the TRAFAC class translation factor GTPase superfamily. Classic translation factor GTPase family. PrfC subfamily.

It is found in the cytoplasm. Its function is as follows. Increases the formation of ribosomal termination complexes and stimulates activities of RF-1 and RF-2. It binds guanine nucleotides and has strong preference for UGA stop codons. It may interact directly with the ribosome. The stimulation of RF-1 and RF-2 is significantly reduced by GTP and GDP, but not by GMP. This is Peptide chain release factor 3 from Aliivibrio salmonicida (strain LFI1238) (Vibrio salmonicida (strain LFI1238)).